The sequence spans 133 residues: Ribosome-binding factor A (133 aa).

Belongs to the RbfA family. As to quaternary structure, monomer. Binds 30S ribosomal subunits, but not 50S ribosomal subunits or 70S ribosomes.

Its subcellular location is the cytoplasm. One of several proteins that assist in the late maturation steps of the functional core of the 30S ribosomal subunit. Associates with free 30S ribosomal subunits (but not with 30S subunits that are part of 70S ribosomes or polysomes). Required for efficient processing of 16S rRNA. May interact with the 5'-terminal helix region of 16S rRNA. This chain is Ribosome-binding factor A, found in Alteromonas mediterranea (strain DSM 17117 / CIP 110805 / LMG 28347 / Deep ecotype).